The sequence spans 201 residues: FMN-dependent NADH:quinone oxidoreductase (201 aa).

FMN-binding positions include Ser-10, 16 to 18, 96 to 99, and 140 to 143; these read SQS, MYNF, and SRGG.

It belongs to the azoreductase type 1 family. In terms of assembly, homodimer. The cofactor is FMN.

The catalysed reaction is 2 a quinone + NADH + H(+) = 2 a 1,4-benzosemiquinone + NAD(+). It carries out the reaction N,N-dimethyl-1,4-phenylenediamine + anthranilate + 2 NAD(+) = 2-(4-dimethylaminophenyl)diazenylbenzoate + 2 NADH + 2 H(+). In terms of biological role, quinone reductase that provides resistance to thiol-specific stress caused by electrophilic quinones. Also exhibits azoreductase activity. Catalyzes the reductive cleavage of the azo bond in aromatic azo compounds to the corresponding amines. The chain is FMN-dependent NADH:quinone oxidoreductase from Escherichia coli O157:H7.